The following is a 419-amino-acid chain: F-box/LRR-repeat protein At1g67190 (419 aa).

An F-box domain is found at 1 to 48; it reads MDYLPVEVIGNILSRLGGARDVVIASATCRKWREACRKHLQTLSFNSA. LRR repeat units lie at residues 53–82, 96–124, 133–157, 158–183, 185–209, 245–272, 273–297, 301–326, and 356–381; these read YRDL…SIMM, WLMY…EICG, LAHN…LSLS, YVSI…ELVS, EIAM…YFDG, HFKL…DVNH, FTMV…RLWD, DDDD…SLSY, and INDV…IIYG.

This chain is F-box/LRR-repeat protein At1g67190, found in Arabidopsis thaliana (Mouse-ear cress).